The following is a 261-amino-acid chain: uncharacterized protein (261 aa).

Positions 33, 60, 78, and 105 each coordinate NADP(+). S157 serves as the catalytic Proton donor. 3 residues coordinate NADP(+): Y172, K176, and T206. Y172 functions as the Proton acceptor in the catalytic mechanism. K176 serves as the catalytic Lowers pKa of active site Tyr.

Belongs to the short-chain dehydrogenases/reductases (SDR) family.

It localises to the cytoplasm. The protein resides in the nucleus. This is an uncharacterized protein from Schizosaccharomyces pombe (strain 972 / ATCC 24843) (Fission yeast).